Here is a 207-residue protein sequence, read N- to C-terminus: Large ribosomal subunit protein uL4 (207 aa).

Residues 45–89 (RQGTHKVKTRSEVRGGGRKPWRQKGTGRARQGSIRSPQWRGGGTV) are disordered. Residues 60-71 (GGRKPWRQKGTG) show a composition bias toward basic residues.

The protein belongs to the universal ribosomal protein uL4 family. In terms of assembly, part of the 50S ribosomal subunit.

Functionally, one of the primary rRNA binding proteins, this protein initially binds near the 5'-end of the 23S rRNA. It is important during the early stages of 50S assembly. It makes multiple contacts with different domains of the 23S rRNA in the assembled 50S subunit and ribosome. In terms of biological role, forms part of the polypeptide exit tunnel. This chain is Large ribosomal subunit protein uL4, found in Bacillus mycoides (strain KBAB4) (Bacillus weihenstephanensis).